The chain runs to 236 residues: Baculoviral IAP repeat-containing protein 8 (236 aa).

The BIR repeat unit spans residues 7–70; that stretch reads RLITFGTWMY…KWYPGCKYLL (64 aa). Residues C39, C42, H59, and C66 each coordinate Zn(2+). Residues 189 to 224 form an RING-type zinc finger; the sequence is CKICMDRHIAVVFIPCGHLVTCKQCAEAVDRCPMCS.

The protein belongs to the IAP family. In terms of assembly, binds to caspase-9.

Its subcellular location is the cytoplasm. Protects against apoptosis mediated by BAX. The chain is Baculoviral IAP repeat-containing protein 8 (BIRC8) from Pan troglodytes (Chimpanzee).